The sequence spans 175 residues: ATP synthase subunit b (175 aa).

Residues 20–40 form a helical membrane-spanning segment; that stretch reads LIFWTAITFVIVLLILKKIAW.

Belongs to the ATPase B chain family. In terms of assembly, F-type ATPases have 2 components, F(1) - the catalytic core - and F(0) - the membrane proton channel. F(1) has five subunits: alpha(3), beta(3), gamma(1), delta(1), epsilon(1). F(0) has four main subunits: a(1), b(2) and c(10-14). The alpha and beta chains form an alternating ring which encloses part of the gamma chain. F(1) is attached to F(0) by a central stalk formed by the gamma and epsilon chains, while a peripheral stalk is formed by the delta and b chains.

It localises to the cell inner membrane. Functionally, f(1)F(0) ATP synthase produces ATP from ADP in the presence of a proton or sodium gradient. F-type ATPases consist of two structural domains, F(1) containing the extramembraneous catalytic core and F(0) containing the membrane proton channel, linked together by a central stalk and a peripheral stalk. During catalysis, ATP synthesis in the catalytic domain of F(1) is coupled via a rotary mechanism of the central stalk subunits to proton translocation. Its function is as follows. Component of the F(0) channel, it forms part of the peripheral stalk, linking F(1) to F(0). This Pelodictyon phaeoclathratiforme (strain DSM 5477 / BU-1) protein is ATP synthase subunit b.